A 185-amino-acid chain; its full sequence is NADH-dependent FMN reductase AsuE2 (185 aa).

Low complexity predominate over residues 1–13; that stretch reads MSTHTARRAGATA. The interval 1–24 is disordered; the sequence is MSTHTARRAGATAGHDRDRGTEPG. Basic and acidic residues predominate over residues 14–24; the sequence is GHDRDRGTEPG.

Belongs to the non-flavoprotein flavin reductase family. Does not interact with AsuE1, suggesting a possible transient interaction between the two enzymes instead of formation of a stable complex.

The enzyme catalyses FMNH2 + NAD(+) = FMN + NADH + 2 H(+). The protein operates within antibiotic biosynthesis. In terms of biological role, involved in the biosynthesis of the antibiotic asukamycin. When flavin concentration is low, AsuE2 assists the protoasukamycin 4-monooxygenase AsuE1 by providing a reduced form of flavin, enhancing AsuE1 activity. The protein is NADH-dependent FMN reductase AsuE2 of Streptomyces nodosus subsp. asukaensis.